The primary structure comprises 154 residues: UPF0178 protein SSP2038 (154 aa).

The protein belongs to the UPF0178 family.

This chain is UPF0178 protein SSP2038, found in Staphylococcus saprophyticus subsp. saprophyticus (strain ATCC 15305 / DSM 20229 / NCIMB 8711 / NCTC 7292 / S-41).